The sequence spans 284 residues: Nucleotide-binding protein SO_3964 (284 aa).

8–15 is an ATP binding site; sequence GRSGSGKS. Residue 56–59 participates in GTP binding; sequence DVRN.

The protein belongs to the RapZ-like family.

In terms of biological role, displays ATPase and GTPase activities. The polypeptide is Nucleotide-binding protein SO_3964 (Shewanella oneidensis (strain ATCC 700550 / JCM 31522 / CIP 106686 / LMG 19005 / NCIMB 14063 / MR-1)).